The primary structure comprises 432 residues: Glutamyl-tRNA reductase (432 aa).

Residues 49–52 (TCNR), S101, 106–108 (EPQ), and Q112 contribute to the substrate site. Catalysis depends on C50, which acts as the Nucleophile. Position 181 to 186 (181 to 186 (GAGETI)) interacts with NADP(+). Positions 408-432 (PEKPGYRHPPVATPIVRTDDANPAP) are disordered.

This sequence belongs to the glutamyl-tRNA reductase family. Homodimer.

The catalysed reaction is (S)-4-amino-5-oxopentanoate + tRNA(Glu) + NADP(+) = L-glutamyl-tRNA(Glu) + NADPH + H(+). It functions in the pathway porphyrin-containing compound metabolism; protoporphyrin-IX biosynthesis; 5-aminolevulinate from L-glutamyl-tRNA(Glu): step 1/2. In terms of biological role, catalyzes the NADPH-dependent reduction of glutamyl-tRNA(Glu) to glutamate 1-semialdehyde (GSA). This Xanthomonas campestris pv. campestris (strain B100) protein is Glutamyl-tRNA reductase.